The primary structure comprises 447 residues: Ribulose bisphosphate carboxylase large chain (447 aa).

Lysine 5 is subject to N6,N6,N6-trimethyllysine. Substrate-binding residues include asparagine 114 and threonine 164. Lysine 166 (proton acceptor) is an active-site residue. A substrate-binding site is contributed by lysine 168. Residues lysine 192, aspartate 194, and glutamate 195 each coordinate Mg(2+). Position 192 is an N6-carboxylysine (lysine 192). The active-site Proton acceptor is the histidine 285. The substrate site is built by arginine 286, histidine 318, and serine 370.

The protein belongs to the RuBisCO large chain family. Type I subfamily. In terms of assembly, heterohexadecamer of 8 large chains and 8 small chains; disulfide-linked. The disulfide link is formed within the large subunit homodimers. Requires Mg(2+) as cofactor. The disulfide bond which can form in the large chain dimeric partners within the hexadecamer appears to be associated with oxidative stress and protein turnover.

It localises to the plastid. It is found in the chloroplast. The enzyme catalyses 2 (2R)-3-phosphoglycerate + 2 H(+) = D-ribulose 1,5-bisphosphate + CO2 + H2O. It carries out the reaction D-ribulose 1,5-bisphosphate + O2 = 2-phosphoglycolate + (2R)-3-phosphoglycerate + 2 H(+). Its function is as follows. RuBisCO catalyzes two reactions: the carboxylation of D-ribulose 1,5-bisphosphate, the primary event in carbon dioxide fixation, as well as the oxidative fragmentation of the pentose substrate in the photorespiration process. Both reactions occur simultaneously and in competition at the same active site. The sequence is that of Ribulose bisphosphate carboxylase large chain from Camassia leichtlinii (Western quamash).